A 91-amino-acid chain; its full sequence is Putative regulatory protein PTH_1796 (91 aa).

It belongs to the RemA family.

This Pelotomaculum thermopropionicum (strain DSM 13744 / JCM 10971 / SI) protein is Putative regulatory protein PTH_1796.